The sequence spans 604 residues: UvrABC system protein C (604 aa).

Residues 14–91 (ESPGVYRMLD…IKEQRPPYNI (78 aa)) enclose the GIY-YIG domain. One can recognise a UVR domain in the interval 202 to 237 (EQVTAQLTRDMETASQALDFEEAARLRDQIQQLRRL). The disordered stretch occupies residues 538-557 (GHRQQRDKQRRTSTLQDIPG).

The protein belongs to the UvrC family. Interacts with UvrB in an incision complex.

It localises to the cytoplasm. The UvrABC repair system catalyzes the recognition and processing of DNA lesions. UvrC both incises the 5' and 3' sides of the lesion. The N-terminal half is responsible for the 3' incision and the C-terminal half is responsible for the 5' incision. The polypeptide is UvrABC system protein C (Chromohalobacter salexigens (strain ATCC BAA-138 / DSM 3043 / CIP 106854 / NCIMB 13768 / 1H11)).